Reading from the N-terminus, the 340-residue chain is DNA-directed RNA polymerase subunit alpha (340 aa).

The alpha N-terminal domain (alpha-NTD) stretch occupies residues 1–237 (MSSDELVYMN…EQMNPFINFD (237 aa)). The tract at residues 256–340 (FNENLYRSVD…PEEDQIKEGE (85 aa)) is alpha C-terminal domain (alpha-CTD).

Belongs to the RNA polymerase alpha chain family. In terms of assembly, homodimer. The RNAP catalytic core consists of 2 alpha, 1 beta, 1 beta' and 1 omega subunit. When a sigma factor is associated with the core the holoenzyme is formed, which can initiate transcription.

It carries out the reaction RNA(n) + a ribonucleoside 5'-triphosphate = RNA(n+1) + diphosphate. DNA-dependent RNA polymerase catalyzes the transcription of DNA into RNA using the four ribonucleoside triphosphates as substrates. The sequence is that of DNA-directed RNA polymerase subunit alpha from Desulforapulum autotrophicum (strain ATCC 43914 / DSM 3382 / VKM B-1955 / HRM2) (Desulfobacterium autotrophicum).